The primary structure comprises 332 residues: Junctional sarcoplasmic reticulum protein 1 (332 aa).

Positions 1-80 (MTTRGLEDLD…EKELAGKEST (80 aa)) are mediates interaction with CACNA1S. Disordered stretches follow at residues 1–125 (MTTR…PWGD) and 159–332 (APHP…KGRD). Position 51 is a phosphothreonine (threonine 51). A compositionally biased stretch (basic and acidic residues) spans 66 to 76 (GLKKMEKELAG). Composition is skewed to pro residues over residues 98–116 (QAPP…PPRT) and 177–197 (APKP…PGPP). Residues 221–232 (GGSISEASGEES) show a composition bias toward low complexity. Serine 223 and serine 228 each carry phosphoserine. Basic and acidic residues-rich tracts occupy residues 239–256 (GSQE…EKLK) and 283–307 (RRWE…EHGK).

As to quaternary structure, interacts with CACNA1S, CACNB1 and calsequestrin. Specifically expressed in skeletal muscle. Detected in skeletal muscle and tongue (at protein level).

Its subcellular location is the sarcoplasmic reticulum membrane. The protein resides in the endoplasmic reticulum membrane. Its function is as follows. Involved in skeletal muscle excitation/contraction coupling (EC), probably acting as a regulator of the voltage-sensitive calcium channel CACNA1S. EC is a physiological process whereby an electrical signal (depolarization of the plasma membrane) is converted into a chemical signal, a calcium gradient, by the opening of ryanodine receptor calcium release channels. May regulate CACNA1S membrane targeting and activity. The polypeptide is Junctional sarcoplasmic reticulum protein 1 (Jsrp1) (Mus musculus (Mouse)).